The primary structure comprises 475 residues: tRNA (guanine(37)-N(1))-methyltransferase (475 aa).

S-adenosyl-L-methionine contacts are provided by residues histidine 219, 258–259 (DL), and 286–287 (DG). Residues 306-328 (KITKQKPTSNDKKRNRKVESPTV) form a disordered region. Residue asparagine 349 participates in S-adenosyl-L-methionine binding. The segment covering 456-469 (NLVSQSDVSKSSDN) has biased composition (polar residues). The disordered stretch occupies residues 456 to 475 (NLVSQSDVSKSSDNILEKDT).

Belongs to the class I-like SAM-binding methyltransferase superfamily. TRM5/TYW2 family. Monomer.

Its subcellular location is the mitochondrion matrix. The protein resides in the nucleus. The protein localises to the cytoplasm. It catalyses the reaction guanosine(37) in tRNA + S-adenosyl-L-methionine = N(1)-methylguanosine(37) in tRNA + S-adenosyl-L-homocysteine + H(+). Functionally, specifically methylates the N1 position of guanosine-37 in various cytoplasmic and mitochondrial tRNAs. Methylation is not dependent on the nature of the nucleoside 5' of the target nucleoside. This is the first step in the biosynthesis of wybutosine (yW), a modified base adjacent to the anticodon of tRNAs and required for accurate decoding. The sequence is that of tRNA (guanine(37)-N(1))-methyltransferase from Batrachochytrium dendrobatidis (strain JAM81 / FGSC 10211) (Frog chytrid fungus).